Consider the following 105-residue polypeptide: UPF0145 protein LPC_0273 (105 aa).

Belongs to the UPF0145 family.

In Legionella pneumophila (strain Corby), this protein is UPF0145 protein LPC_0273.